Consider the following 119-residue polypeptide: uncharacterized protein (119 aa).

Positions 6–36 (QAYLDIQGKIAEFRREIKALRVEEKAITANL) form a coiled coil. The segment at 95–119 (AVTGSSSNVKIRKSAPARNEEDDDG) is disordered.

This is an uncharacterized protein from Frog virus 3 (isolate Goorha) (FV-3).